Reading from the N-terminus, the 391-residue chain is Elongation factor Tu (391 aa).

Residues 10-201 (KPHVNIGTIG…AVDEFIPTPE (192 aa)) form the tr-type G domain. Residues 19-26 (GHVDHGKT) are G1. 19-26 (GHVDHGKT) serves as a coordination point for GTP. Thr-26 lines the Mg(2+) pocket. The tract at residues 55-59 (GITIS) is G2. Residues 76-79 (DCPG) form a G3 region. Residues 76–80 (DCPGH) and 131–134 (NKVD) contribute to the GTP site. Residues 131 to 134 (NKVD) are G4. The interval 169-171 (SAL) is G5.

Belongs to the TRAFAC class translation factor GTPase superfamily. Classic translation factor GTPase family. EF-Tu/EF-1A subfamily. Monomer.

The protein localises to the cytoplasm. It carries out the reaction GTP + H2O = GDP + phosphate + H(+). GTP hydrolase that promotes the GTP-dependent binding of aminoacyl-tRNA to the A-site of ribosomes during protein biosynthesis. The polypeptide is Elongation factor Tu (Roseobacter denitrificans (strain ATCC 33942 / OCh 114) (Erythrobacter sp. (strain OCh 114))).